We begin with the raw amino-acid sequence, 227 residues long: Large ribosomal subunit protein uL3 (227 aa).

The interval 146 to 167 (RGPMAHGSKFHRHQGSNGACSS) is disordered.

The protein belongs to the universal ribosomal protein uL3 family. In terms of assembly, part of the 50S ribosomal subunit. Forms a cluster with proteins L14 and L19.

Functionally, one of the primary rRNA binding proteins, it binds directly near the 3'-end of the 23S rRNA, where it nucleates assembly of the 50S subunit. In Agathobacter rectalis (strain ATCC 33656 / DSM 3377 / JCM 17463 / KCTC 5835 / VPI 0990) (Eubacterium rectale), this protein is Large ribosomal subunit protein uL3.